The sequence spans 270 residues: Probable 6-oxopurine nucleoside phosphorylase (270 aa).

Residues serine 10 and 48 to 49 contribute to the phosphate site; that span reads RH. Residue methionine 191 participates in substrate binding. Threonine 192 contributes to the phosphate binding site. Residue 215–217 coordinates substrate; the sequence is NYA.

It belongs to the PNP/MTAP phosphorylase family. MTAP subfamily. Homohexamer. Dimer of a homotrimer.

The enzyme catalyses a purine D-ribonucleoside + phosphate = a purine nucleobase + alpha-D-ribose 1-phosphate. It participates in purine metabolism; purine nucleoside salvage. In terms of biological role, purine nucleoside phosphorylase which is highly specific for 6-oxopurine nucleosides. Cleaves guanosine or inosine to respective bases and sugar-1-phosphate molecules. Involved in purine salvage. The polypeptide is Probable 6-oxopurine nucleoside phosphorylase (Korarchaeum cryptofilum (strain OPF8)).